Reading from the N-terminus, the 160-residue chain is Protein cornichon homolog 2 (160 aa).

Residues 1–10 (MAFTFAAFCY) are Cytoplasmic-facing. A helical membrane pass occupies residues 11-31 (MLTLVLCAALIFFVIWQIIAF). Residues 32–72 (DELRTDFKNPIDQSNPTRARERILNIERICNLLRRLVVPEY) lie on the Lumenal side of the membrane. The helical transmembrane segment at 73 to 93 (SIHGLFCLMFMCAGEWVTLGL) threads the bilayer. At 94–138 (NIPLLLYHLWRFFHRPADGSEVMYDPVSVMNADILNYCQKESWCK) the chain is on the cytoplasmic side. The chain crosses the membrane as a helical span at residues 139–159 (LGFYLLSFFYYLYSMVYALVS). A topological domain (lumenal) is located at residue phenylalanine 160.

The protein belongs to the cornichon family.

The protein resides in the membrane. Its function is as follows. Regulates the trafficking and gating properties of AMPA-selective glutamate receptors (AMPARs). The sequence is that of Protein cornichon homolog 2 (cnih2) from Danio rerio (Zebrafish).